We begin with the raw amino-acid sequence, 63 residues long: Hirudin (63 aa).

The tract at residues Val-1–Tyr-3 is interaction with thrombin active site. Intrachain disulfides connect Cys-6-Cys-14, Cys-16-Cys-28, and Cys-22-Cys-39. Residues Cys-39–Leu-63 are disordered. Thr-45 is a glycosylation site (O-linked (GalNAc...) threonine). Residues Asp-55–Leu-63 form an interaction with fibrinogen-binding exosite of thrombin region. Tyr-62 bears the Sulfotyrosine mark.

It belongs to the protease inhibitor I14 (hirudin) family.

It is found in the secreted. Functionally, hirudin is a potent thrombin-specific protease inhibitor. It forms a stable non-covalent complex with alpha-thrombin, thereby abolishing its ability to cleave fibrinogen. The polypeptide is Hirudin (Poecilobdella viridis (Indian freshwater leech)).